Reading from the N-terminus, the 305-residue chain is uncharacterized protein (305 aa).

The protein belongs to the IIV-6 436R family.

This is an uncharacterized protein from Acheta domesticus (House cricket).